The following is a 175-amino-acid chain: Large ribosomal subunit protein uL10 (175 aa).

The protein belongs to the universal ribosomal protein uL10 family. As to quaternary structure, part of the ribosomal stalk of the 50S ribosomal subunit. The N-terminus interacts with L11 and the large rRNA to form the base of the stalk. The C-terminus forms an elongated spine to which L12 dimers bind in a sequential fashion forming a multimeric L10(L12)X complex.

Its function is as follows. Forms part of the ribosomal stalk, playing a central role in the interaction of the ribosome with GTP-bound translation factors. The protein is Large ribosomal subunit protein uL10 of Delftia acidovorans (strain DSM 14801 / SPH-1).